Consider the following 156-residue polypeptide: MSLLIDFIDETEEVKEEYMSLIREVLEKAAQMENIEDGAEVSVTFVDNERIREINRDYRDKDQPTDVISFAMEEMGEGEMEIVGAEMPRMLGDLIISIPRAKEQAEEYGHSFDRELGFLALHGFLHLLGYDHMTEEDEKEMFGRQKEILEAFGLGR.

Zn(2+) contacts are provided by histidine 122, histidine 126, and histidine 132.

This sequence belongs to the endoribonuclease YbeY family. Zn(2+) is required as a cofactor.

It localises to the cytoplasm. Single strand-specific metallo-endoribonuclease involved in late-stage 70S ribosome quality control and in maturation of the 3' terminus of the 16S rRNA. The chain is Endoribonuclease YbeY from Bacillus cereus (strain ATCC 14579 / DSM 31 / CCUG 7414 / JCM 2152 / NBRC 15305 / NCIMB 9373 / NCTC 2599 / NRRL B-3711).